The following is a 478-amino-acid chain: MKIWLSGIYEFFLRYKNTWAEVWKIRKELDHPNRKKDESEFLPAHLDLIETPVSKKPRLIAYLIMLFLVVAIVLASVSKVEIVATAPGKLTFSGRSKEIKPIENAIVQEIFVKDGQFVEKGQLLVSLTALGSDADIKKTMASLSLAKLENYRYQTLLTAIEKESLPVIDLSRTEFKDSSEEDRLRIKHLIEEQYTTWQKQKTQKTLAYKRKEAEKQTIFAYVRKYEGATRIEQEKFKDFKALYKQKSLSKHELLAQENKLIEAQNELAVYRSKLNELENDLLNVKEELELITQFFKSDVLEKLKQHIENERQLRLELEKNNQRRQASMIRAPVSGTVQQLKIHTIGGVVTTAETLMIIVPEDDVLEATALVPNKDIGFVAAGQEVIIKVETFPYTRYGYLTGRIKHISPDAIEQPNVGLVFNATIAIDRKNLTSPDGRKIDLSSGMTITAEIKTGERSVMSYLLSPLEESVTESLRER.

Over 1-59 (MKIWLSGIYEFFLRYKNTWAEVWKIRKELDHPNRKKDESEFLPAHLDLIETPVSKKPRL) the chain is Cytoplasmic. The helical transmembrane segment at 60 to 80 (IAYLIMLFLVVAIVLASVSKV) threads the bilayer. The Periplasmic segment spans residues 81-478 (EIVATAPGKL…ESVTESLRER (398 aa)).

This sequence belongs to the membrane fusion protein (MFP) (TC 8.A.1) family.

The protein localises to the cell inner membrane. In terms of biological role, involved in the transport of the Leukotoxin. The sequence is that of Leukotoxin secretion protein D (lktD) from Mannheimia haemolytica (Pasteurella haemolytica).